The chain runs to 624 residues: Anti-CBASS protein Acb1 (624 aa).

Residue Y106 coordinates 3',3'-cGAMP. Y106 provides a ligand contact to 3',3'-cUAMP. Catalysis depends on residues H503, T505, H581, and T583. W617 provides a ligand contact to 3',3'-cGAMP. W617 is a binding site for 3',3'-cUAMP.

It belongs to the anti-CBASS protein Acb1 family.

It carries out the reaction 3',3'-cUAMP + H2O = U[3'-5']pAp[3'] + H(+). The enzyme catalyses 3',3',3'-c-tri-AMP + H2O = A[3'-5']pA[3'-5']pAp[3'] + H(+). The catalysed reaction is 3',3',3'-cAAG + H2O = G[3'-5']pA[3'-5']pAp[3'] + H(+). It catalyses the reaction 3',3',3'-cAAG + H2O = A[3'-5']pG[3'-5']pAp[3'] + H(+). It carries out the reaction 3',3'-cGAMP + H2O = G[3'-5']pAp[3'] + H(+). Counteracts or regulates the endogenous CBASS antiviral defense system. Phosphodiesterase that enables metal-independent hydrolysis of the host cyclic di- and trinucleotide CBASS signals such as 3'3'-cGAMP, 3'3'cUA, and 3'3'3'-cAAA. This Sphingomonas paeninsulae protein is Anti-CBASS protein Acb1.